The primary structure comprises 337 residues: Dihydroorotate dehydrogenase (quinone) (337 aa).

Residues Ala-61–Lys-65 and Thr-85 contribute to the FMN site. Residue Lys-65 participates in substrate binding. Asn-110–Phe-114 is a substrate binding site. The FMN site is built by Asn-138 and Asn-171. Asn-171 serves as a coordination point for substrate. Ser-174 acts as the Nucleophile in catalysis. Asn-176 contacts substrate. The FMN site is built by Lys-216 and Thr-244. Residue Asn-245–Thr-246 coordinates substrate. FMN-binding positions include Gly-267, Gly-296, and Tyr-317 to Ser-318.

Belongs to the dihydroorotate dehydrogenase family. Type 2 subfamily. As to quaternary structure, monomer. Requires FMN as cofactor.

The protein resides in the cell membrane. It carries out the reaction (S)-dihydroorotate + a quinone = orotate + a quinol. Its pathway is pyrimidine metabolism; UMP biosynthesis via de novo pathway; orotate from (S)-dihydroorotate (quinone route): step 1/1. Functionally, catalyzes the conversion of dihydroorotate to orotate with quinone as electron acceptor. In Thiobacillus denitrificans (strain ATCC 25259 / T1), this protein is Dihydroorotate dehydrogenase (quinone).